The sequence spans 962 residues: Protease 3 (962 aa).

A signal peptide spans 1–23 (MPRSIWFKALLLFVALWAPLSQA). His88 serves as a coordination point for Zn(2+). Glu91 (proton acceptor) is an active-site residue. Zn(2+)-binding residues include His92 and Glu169.

This sequence belongs to the peptidase M16 family. As to quaternary structure, monomer. The cofactor is Zn(2+).

The protein resides in the periplasm. It carries out the reaction Preferential cleavage of 16-Tyr-|-Leu-17 and 25-Phe-|-Tyr-26 bonds of oxidized insulin B chain. Also acts on other substrates of Mw less than 7 kDa such as insulin and glucagon.. Functionally, endopeptidase that degrades small peptides of less than 7 kDa, such as glucagon and insulin. The chain is Protease 3 (ptrA) from Escherichia coli O6:H1 (strain CFT073 / ATCC 700928 / UPEC).